The sequence spans 292 residues: Lyso-ornithine lipid O-acyltransferase (292 aa).

A helical membrane pass occupies residues 11–31 (GMLLVMVSLVLMPVQILCLWL). The disordered stretch occupies residues 258–292 (RLRGRSRSAAKGEPAPACSAAPDIPSDAQRSRLAP).

This sequence belongs to the 1-acyl-sn-glycerol-3-phosphate acyltransferase family. OlsA subfamily.

The protein resides in the membrane. It carries out the reaction a lyso-ornithine lipid + a fatty acyl-[ACP] = an N(2)-[(3R)-3-(acyloxy)acyl]-L-ornithine lipid + holo-[ACP]. The protein operates within lipid metabolism. Its function is as follows. Catalyzes the second step in the formation of ornithine lipids, which are phosphorus-free membrane lipids. Uses acyl-acyl carrier protein (acyl-AcpP) as an acyl donor and converts lyso-ornithine lipid (LOL) into ornithine lipid (OL). This chain is Lyso-ornithine lipid O-acyltransferase, found in Rhizobium meliloti (strain 1021) (Ensifer meliloti).